A 1476-amino-acid polypeptide reads, in one-letter code: MSKTLKKKKHWLSKVQECAVSWAGPPGDLGAEIRGGAERGEFPYLGRLRDEAGGGGGTCCVVSGKAPSPGDVLLEVNGTPVSGLTNRDTLAVIRHFREPIRLKTVKPGKVINKDLRHYLSLQFQKGSIDHKLQQVIRDNLYLRTIPCTTRAPRDGEVPGVDYNFISVEQFKALEESGALLESGTYDGNFYGTPKPPAEPSPFQPDPVDQVLFDNEFDTESQRKRTTSVSKMERMDSSLPEEEEDEDKEAVNGSGSMETREMHSETSDCWMKTVPSYNQTNSSMDFRNYMMRDENLEPLPKNWEMAYTDTGMIYFIDHNTKTTTWLDPRLCKKAKAPEDCEDGELPYGWEKIEDPQYGTYYVDHLNQKTQFENPVEEAKRKKQLGQAEIHSAKTDVERAHFTRDPSQLKGVLVRASLKKSTMGFGFTIIGGDRPDEFLQVKNVLKDGPAAQDGKIAPGDVIVDINGNCVLGHTHADVVQMFQLVPVNQYVNLTLCRGYPLPDDSEDPVVDIVAATPVINGQSLTKGETCMNTQDFKLGAMVLDQNGKSGQILASDRLNGPSESSEQRASLASSGSSQPELVTIPLIKGPKGFGFAIADSPTGQKVKMILDSQWCQGLQKGDIIKEIYHQNVQNLTHLQVVEVLKQFPVGADVPLLILRGGPCSPTKTAKTKTDTKENSGSLETINEPIPQPMPFPPSIIRSGSPKLDPSEVYLKSKTLYEDKPPNTKDLDVFLRKQESGFGFRVLGGDGPDQSIYIGAIIPLGAAEKDGRLRAADELMCIDGIPVKGKSHKQVLDLMTTAARNGHVLLTVRRKIFYGEKQPEDESHQAFSQNGSPRLNRAELPTRSAPQEAYDVTLQRKENEGFGFVILTSKSKPPPGVIPHKIGRVIDGSPADRCGGLKVGDHISAVNGQSIVDLSHDNIVQLIKDAGVTVTLTVVAEEEHHGPPSGTNSARQSPALQHRPMGQAQANHIPGDRIALEGEIGRDVCSSYRHSWSDHKHLAQPDTAVISVVGSRHNQSLGCYPVELERGPRGFGFSLRGGKEYNMGLFILRLAEDGPAIKDGRIHVGDQIVEINGEPTQGITHTRAIELIQAGGNKVLLLLRPGTGLIPDHGDWDTNSPSSSNVIYDEQPPPLPSSHSASTFEESHVPATEDSLTRVQICEKAEELKDTVQEKKSTLNGSQPEMKYQSVHKTMSKKDPPRGSGHGEKSRLKGENGVTRRGRSASPKKSVNRHSEEHLEKIPRPLKSDPKEKSRDRSLSPRKGESKGRLTIKAGSGQDPYRKDRGRSSSPKKQQKIGGNSLSNTEGKLSEAGSRRAAGHPRDSTEQLPDGREKSGVSRKDLKQSQPGKTRTKSPEKKSSKVDETSLPSKKTSSTAGRVVSEKEKGKKPTAGETSRETVEHTQISAKQLKQEAQEKTALGNADDHKGRESEVTDRCRERAGCTPQSSSLVKKAPITPGPWRVPRANKVTGTTGMADKQL.

A PDZ 1 domain is found at 18–108 (CAVSWAGPPG…PIRLKTVKPG (91 aa)). The tract at residues 18 to 108 (CAVSWAGPPG…PIRLKTVKPG (91 aa)) is interaction with ADRB1 and TGFA. The Guanylate kinase-like domain maps to 116-290 (RHYLSLQFQK…SSMDFRNYMM (175 aa)). ATP is bound at residue 123-130 (FQKGSIDH). A disordered region spans residues 184–266 (TYDGNFYGTP…ETREMHSETS (83 aa)). Residues 193-204 (PKPPAEPSPFQP) are compositionally biased toward pro residues. Phosphoserine is present on serine 236. Over residues 238-247 (LPEEEEDEDK) the composition is skewed to acidic residues. WW domains are found at residues 296-329 (EPLPKNWEMAYTDTGMIYFIDHNTKTTTWLDPRL) and 342-375 (GELPYGWEKIEDPQYGTYYVDHLNQKTQFENPVE). Residues 413-495 (RASLKKSTMG…NQYVNLTLCR (83 aa)) form the PDZ 2 domain. An interaction with PTEN region spans residues 413-495 (RASLKKSTMG…NQYVNLTLCR (83 aa)). Positions 551–575 (LASDRLNGPSESSEQRASLASSGSS) are disordered. Over residues 559-575 (PSESSEQRASLASSGSS) the composition is skewed to polar residues. The 77-residue stretch at 581–657 (TIPLIKGPKG…GADVPLLILR (77 aa)) folds into the PDZ 3 domain. The residue at position 598 (serine 598) is a Phosphoserine. Residues 664–691 (TKTAKTKTDTKENSGSLETINEPIPQPM) form a disordered region. Serine 702 is subject to Phosphoserine. The PDZ 4 domain occupies 729–811 (DVFLRKQESG…NGHVLLTVRR (83 aa)). The interaction with ADGRB1 stretch occupies residues 729–811 (DVFLRKQESG…NGHVLLTVRR (83 aa)). The tract at residues 818–844 (KQPEDESHQAFSQNGSPRLNRAELPTR) is disordered. Residues serine 833 and serine 916 each carry the phosphoserine modification. The 88-residue stretch at 852-939 (DVTLQRKENE…TVTLTVVAEE (88 aa)) folds into the PDZ 5 domain. An interaction with LPAR2 and GRIN2B region spans residues 852 to 939 (DVTLQRKENE…TVTLTVVAEE (88 aa)). The interval 939-966 (EEHHGPPSGTNSARQSPALQHRPMGQAQ) is disordered. A compositionally biased stretch (polar residues) spans 946–956 (SGTNSARQSPA). Residues 1022 to 1104 (PVELERGPRG…KVLLLLRPGT (83 aa)) enclose the PDZ 6 domain. 2 disordered regions span residues 1109–1151 (DHGD…ATED) and 1168–1476 (TVQE…DKQL). A compositionally biased stretch (polar residues) spans 1114–1123 (DTNSPSSSNV). Basic and acidic residues-rich tracts occupy residues 1193 to 1211 (SKKDPPRGSGHGEKSRLKG) and 1230 to 1265 (RHSEEHLEKIPRPLKSDPKEKSRDRSLSPRKGESKG). The segment covering 1285 to 1304 (SSSPKKQQKIGGNSLSNTEG) has biased composition (polar residues). 2 stretches are compositionally biased toward basic and acidic residues: residues 1317 to 1340 (HPRDSTEQLPDGREKSGVSRKDLK) and 1350 to 1361 (KSPEKKSSKVDE). Serine 1321 carries the post-translational modification Phosphoserine. The segment covering 1363 to 1373 (SLPSKKTSSTA) has biased composition (polar residues). Residues 1419–1437 (ADDHKGRESEVTDRCRERA) are compositionally biased toward basic and acidic residues.

The protein belongs to the MAGUK family. Interacts with ADRB1, ADGRB1, LPAR2/EDG4, GRIN2B, PTEN, and PTPRB. Interacts with unidentified tyrosine phosphorylated proteins. Interacts with FZD4, FZD7, TGFA and VANGL2. Interacts with DLL1. Interacts with PRRG4 (via cytoplasmic domain). Widely expressed. Colocalizes with TGFA in neurons in the cortex and dentate gyrus, as well as in ependymal cells and some astrocytes (at protein level). Present in lens epithelium.

The protein resides in the cell membrane. The protein localises to the cell junction. Its subcellular location is the tight junction. It is found in the nucleus. Its function is as follows. Acts as a scaffolding protein at cell-cell junctions, thereby regulating various cellular and signaling processes. Cooperates with PTEN to modulate the kinase activity of AKT1. Its interaction with PTPRB and tyrosine phosphorylated proteins suggests that it may link receptor tyrosine phosphatase with its substrates at the plasma membrane. In polarized epithelial cells, involved in efficient trafficking of TGFA to the cell surface. Regulates the ability of LPAR2 to activate ERK and RhoA pathways. Regulates the JNK signaling cascade via its interaction with FZD4 and VANGL2. In Mus musculus (Mouse), this protein is Membrane-associated guanylate kinase, WW and PDZ domain-containing protein 3 (Magi3).